Reading from the N-terminus, the 540-residue chain is uncharacterized protein (540 aa).

The N-terminal stretch at 1 to 20 (MSVSYRGPRWSSFVHVSQHS) is a signal peptide.

Belongs to the TP096X family.

This is an uncharacterized protein from Treponema pallidum (strain Nichols).